A 403-amino-acid polypeptide reads, in one-letter code: Rhomboid-like protein 15 (403 aa).

The next 5 helical transmembrane spans lie at 22 to 42 (IPFL…ICLL), 70 to 90 (AIIF…LVPM), 103 to 123 (LLYL…LIAS), 141 to 161 (AIGF…LSGV), and 176 to 196 (LYPW…SLLG). Serine 145 acts as the Nucleophile in catalysis. Residue histidine 197 is the Charge relay system of the active site. The chain crosses the membrane as a helical span at residues 198-218 (LCGILSGFSYSYGLFNFLMPG). The tract at residues 282 to 316 (EASNQSSEDSRFPGRGRTLSTARDPTAPAGETDPN) is disordered. In terms of domain architecture, UBA spans 361–401 (AASEEQIQKLVAMGFDRTQVEVALAAADDDLTVAVEILMSQ).

The protein belongs to the peptidase S54 family.

Its subcellular location is the membrane. Its function is as follows. Probable rhomboid-type serine protease that catalyzes intramembrane proteolysis. May function in senescence. This is Rhomboid-like protein 15 from Arabidopsis thaliana (Mouse-ear cress).